A 54-amino-acid chain; its full sequence is Large ribosomal subunit protein bL33 (54 aa).

This sequence belongs to the bacterial ribosomal protein bL33 family.

In Chloroflexus aggregans (strain MD-66 / DSM 9485), this protein is Large ribosomal subunit protein bL33.